The following is a 434-amino-acid chain: Histidinol dehydrogenase (434 aa).

Tyr-130, Gln-188, and Asn-211 together coordinate NAD(+). Ser-237, Gln-259, and His-262 together coordinate substrate. Zn(2+)-binding residues include Gln-259 and His-262. Catalysis depends on proton acceptor residues Glu-326 and His-327. His-327, Asp-360, Glu-414, and His-419 together coordinate substrate. Zn(2+) is bound at residue Asp-360. His-419 contributes to the Zn(2+) binding site.

It belongs to the histidinol dehydrogenase family. In terms of assembly, homodimer. Zn(2+) is required as a cofactor.

It catalyses the reaction L-histidinol + 2 NAD(+) + H2O = L-histidine + 2 NADH + 3 H(+). Its pathway is amino-acid biosynthesis; L-histidine biosynthesis; L-histidine from 5-phospho-alpha-D-ribose 1-diphosphate: step 9/9. In terms of biological role, catalyzes the sequential NAD-dependent oxidations of L-histidinol to L-histidinaldehyde and then to L-histidine. The sequence is that of Histidinol dehydrogenase from Salmonella choleraesuis (strain SC-B67).